The chain runs to 147 residues: Small ribosomal subunit protein uS12 (147 aa).

The protein belongs to the universal ribosomal protein uS12 family. As to quaternary structure, part of the 30S ribosomal subunit.

In terms of biological role, with S4 and S5 plays an important role in translational accuracy. Located at the interface of the 30S and 50S subunits. This chain is Small ribosomal subunit protein uS12, found in Methanococcus vannielii (strain ATCC 35089 / DSM 1224 / JCM 13029 / OCM 148 / SB).